The sequence spans 203 residues: Glycerol-3-phosphate acyltransferase (203 aa).

The next 4 membrane-spanning stretches (helical) occupy residues 4–24 (LVLL…AVLI), 80–100 (PFLL…PIFF), 116–136 (APIG…TVFI), and 138–158 (GYSS…TWFV).

It belongs to the PlsY family. In terms of assembly, probably interacts with PlsX.

It localises to the cell inner membrane. It catalyses the reaction an acyl phosphate + sn-glycerol 3-phosphate = a 1-acyl-sn-glycero-3-phosphate + phosphate. It participates in lipid metabolism; phospholipid metabolism. Functionally, catalyzes the transfer of an acyl group from acyl-phosphate (acyl-PO(4)) to glycerol-3-phosphate (G3P) to form lysophosphatidic acid (LPA). This enzyme utilizes acyl-phosphate as fatty acyl donor, but not acyl-CoA or acyl-ACP. In Photobacterium profundum (strain SS9), this protein is Glycerol-3-phosphate acyltransferase.